The sequence spans 223 residues: Ribose-5-phosphate isomerase A (223 aa).

Substrate is bound by residues 28-31 (TGST), 81-84 (DGAD), and 94-97 (KGGG). Catalysis depends on glutamate 103, which acts as the Proton acceptor. Lysine 121 contacts substrate.

It belongs to the ribose 5-phosphate isomerase family. In terms of assembly, homodimer.

The catalysed reaction is aldehydo-D-ribose 5-phosphate = D-ribulose 5-phosphate. The protein operates within carbohydrate degradation; pentose phosphate pathway; D-ribose 5-phosphate from D-ribulose 5-phosphate (non-oxidative stage): step 1/1. Its function is as follows. Catalyzes the reversible conversion of ribose-5-phosphate to ribulose 5-phosphate. This is Ribose-5-phosphate isomerase A from Janthinobacterium sp. (strain Marseille) (Minibacterium massiliensis).